We begin with the raw amino-acid sequence, 297 residues long: MGTAKTFTLLAAMTAIFMAIGFLVGGMAGMILAFVVAAGMNVFAWWNSDKMVLRMQGAQEVLPDTKNPMLRAFGEDVARLAENAGLPAPRIYIIDTPQPNAFATGRNPQNAAVAATTGLLNMLNREEVAGVMAHELAHVQNRDTLTMTVTATLAGAIGMLANFALFFGRDRAGLIGSIAIMIFAPMAAALVQMAISRSREYVADKRGAEICGNPLWLASALEKIERGARSQINPYAERSPAMAHMYISNPLNGRGQDKLFSTHPSTANRVEALRRMAGEMGISGVAAPTARSSGPWG.

Residues 16-36 (IFMAIGFLVGGMAGMILAFVV) form a helical membrane-spanning segment. Position 134 (His-134) interacts with Zn(2+). Residue Glu-135 is part of the active site. Residue His-138 coordinates Zn(2+). Transmembrane regions (helical) follow at residues 147-167 (MTVT…ALFF) and 175-195 (IGSI…QMAI). Glu-200 contacts Zn(2+).

This sequence belongs to the peptidase M48B family. It depends on Zn(2+) as a cofactor.

The protein localises to the cell inner membrane. The protein is Protease HtpX homolog of Hyphomonas neptunium (strain ATCC 15444).